Consider the following 90-residue polypeptide: Acylphosphatase (90 aa).

The Acylphosphatase-like domain occupies 3 to 90 (HYHAIITGRV…AHYQDFRIKG (88 aa)). Active-site residues include Arg18 and Asn36.

It belongs to the acylphosphatase family.

The enzyme catalyses an acyl phosphate + H2O = a carboxylate + phosphate + H(+). This is Acylphosphatase (acyP) from Bacillus pumilus (strain SAFR-032).